The primary structure comprises 155 residues: Ribonuclease H (155 aa).

One can recognise an RNase H type-1 domain in the interval 1-146; the sequence is MNALFAWTDG…ADELARAGMA (146 aa). The Mg(2+) site is built by Asp9, Glu52, Asp74, and Asp138.

It belongs to the RNase H family. As to quaternary structure, monomer. The cofactor is Mg(2+).

It is found in the cytoplasm. It catalyses the reaction Endonucleolytic cleavage to 5'-phosphomonoester.. Functionally, endonuclease that specifically degrades the RNA of RNA-DNA hybrids. This chain is Ribonuclease H, found in Paracoccus denitrificans (strain Pd 1222).